Consider the following 1567-residue polypeptide: ABC multidrug transporter MDR1 (1567 aa).

Pro residues predominate over residues methionine 1 to glycine 11. The interval methionine 1–aspartate 37 is disordered. The span at serine 22–proline 32 shows a compositional bias: polar residues. Asparagine 149, asparagine 157, and asparagine 356 each carry an N-linked (GlcNAc...) asparagine glycan. One can recognise an ABC transporter 1 domain in the interval valine 167–proline 432. The next 6 membrane-spanning stretches (helical) occupy residues serine 543–phenylalanine 563, glycine 571–isoleucine 591, isoleucine 636–leucine 656, alanine 661–phenylalanine 681, isoleucine 691–phenylalanine 711, and leucine 798–leucine 818. N-linked (GlcNAc...) asparagine glycosylation is found at asparagine 819, asparagine 895, and asparagine 912. The region spanning phenylalanine 891 to alanine 1134 is the ABC transporter 2 domain. Glycine 927 to threonine 934 serves as a coordination point for ATP. Positions glutamate 1172–proline 1202 are disordered. The helical transmembrane segment at isoleucine 1231–leucine 1251 threads the bilayer. An N-linked (GlcNAc...) asparagine glycan is attached at asparagine 1253. 5 consecutive transmembrane segments (helical) span residues alanine 1257–valine 1277, valine 1305–alanine 1325, isoleucine 1345–isoleucine 1365, glutamate 1372–leucine 1392, and glycine 1498–isoleucine 1518.

The protein belongs to the ABC transporter superfamily. ABCG family. PDR (TC 3.A.1.205) subfamily.

It localises to the cell membrane. It catalyses the reaction voriconazole(in) + ATP + H2O = voriconazole(out) + ADP + phosphate + H(+). It carries out the reaction fluconazole(in) + ATP + H2O = fluconazole(out) + ADP + phosphate + H(+). The enzyme catalyses (R)-miconazole(in) + ATP + H2O = (R)-miconazole(out) + ADP + phosphate + H(+). The catalysed reaction is (S)-miconazole(in) + ATP + H2O = (S)-miconazole(out) + ADP + phosphate + H(+). Functionally, pleiotropic ABC efflux transporter that may be involved in the modulation susceptibility to a wide range of unrelated cytotoxic compounds, including ethidium bromide, ketoconazole, cycloheximide, fluconazole, griseofulvin, imazalil and itraconazole. This is ABC multidrug transporter MDR1 from Trichophyton interdigitale (strain MR816).